The primary structure comprises 190 residues: 6,7-dimethyl-8-ribityllumazine synthase (190 aa).

Residues W31, 65 to 67 (SFE), and 89 to 91 (CVI) contribute to the 5-amino-6-(D-ribitylamino)uracil site. 94–95 (ET) contributes to the (2S)-2-hydroxy-3-oxobutyl phosphate binding site. Residue H97 is the Proton donor of the active site. Position 122 (F122) interacts with 5-amino-6-(D-ribitylamino)uracil. R136 contacts (2S)-2-hydroxy-3-oxobutyl phosphate.

Belongs to the DMRL synthase family.

It carries out the reaction (2S)-2-hydroxy-3-oxobutyl phosphate + 5-amino-6-(D-ribitylamino)uracil = 6,7-dimethyl-8-(1-D-ribityl)lumazine + phosphate + 2 H2O + H(+). It functions in the pathway cofactor biosynthesis; riboflavin biosynthesis; riboflavin from 2-hydroxy-3-oxobutyl phosphate and 5-amino-6-(D-ribitylamino)uracil: step 1/2. Functionally, catalyzes the formation of 6,7-dimethyl-8-ribityllumazine by condensation of 5-amino-6-(D-ribitylamino)uracil with 3,4-dihydroxy-2-butanone 4-phosphate. This is the penultimate step in the biosynthesis of riboflavin. The sequence is that of 6,7-dimethyl-8-ribityllumazine synthase from Flavobacterium johnsoniae (strain ATCC 17061 / DSM 2064 / JCM 8514 / BCRC 14874 / CCUG 350202 / NBRC 14942 / NCIMB 11054 / UW101) (Cytophaga johnsonae).